Here is a 36-residue protein sequence, read N- to C-terminus: uncharacterized protein (36 aa).

The protein resides in the mitochondrion. This is an uncharacterized protein from Saccharomyces cerevisiae (strain ATCC 204508 / S288c) (Baker's yeast).